The sequence spans 400 residues: CCA-adding enzyme (400 aa).

Positions 27 and 30 each coordinate ATP. Gly-27 and Arg-30 together coordinate CTP. Residues Asp-40 and Asp-42 each coordinate Mg(2+). ATP contacts are provided by Arg-111, Asp-154, Arg-157, Arg-160, and Arg-163. CTP contacts are provided by Arg-111, Asp-154, Arg-157, Arg-160, and Arg-163.

The protein belongs to the tRNA nucleotidyltransferase/poly(A) polymerase family. Bacterial CCA-adding enzyme type 3 subfamily. In terms of assembly, homodimer. The cofactor is Mg(2+).

It catalyses the reaction a tRNA precursor + 2 CTP + ATP = a tRNA with a 3' CCA end + 3 diphosphate. The enzyme catalyses a tRNA with a 3' CCA end + 2 CTP + ATP = a tRNA with a 3' CCACCA end + 3 diphosphate. In terms of biological role, catalyzes the addition and repair of the essential 3'-terminal CCA sequence in tRNAs without using a nucleic acid template. Adds these three nucleotides in the order of C, C, and A to the tRNA nucleotide-73, using CTP and ATP as substrates and producing inorganic pyrophosphate. tRNA 3'-terminal CCA addition is required both for tRNA processing and repair. Also involved in tRNA surveillance by mediating tandem CCA addition to generate a CCACCA at the 3' terminus of unstable tRNAs. While stable tRNAs receive only 3'-terminal CCA, unstable tRNAs are marked with CCACCA and rapidly degraded. The polypeptide is CCA-adding enzyme (Bacillus pumilus (strain SAFR-032)).